Reading from the N-terminus, the 540-residue chain is Keratin, type II cytoskeletal 73 (540 aa).

A head region spans residues 1 to 131 (MSRQFTYKSG…DPEIQKVRAQ (131 aa)). Positions 132–167 (EREQIKVLNNKFASFIDKVRFLEQQNQVLETKWELL) are coil 1A. The IF rod domain maps to 132–445 (EREQIKVLNN…KLLEGEECRM (314 aa)). Residues 168-186 (QQLDLNNCKNNLEPILEGY) are linker 1. Residues 187–278 (ISNLRKQLET…CLYEGETAQI (92 aa)) form a coil 1B region. A linker 12 region spans residues 279–302 (QSHISDTSIILSMDNNRNLDLDSI). The tract at residues 303-441 (IAEVRAQYEE…ATYRKLLEGE (139 aa)) is coil 2. The tract at residues 442 to 540 (ECRMSGEYTN…LSSPTKKTMR (99 aa)) is tail. The interval 502–540 (SGNCSPRGEARTRLGSASEFRDSQGKTLALSSPTKKTMR) is disordered. Residues 526–540 (GKTLALSSPTKKTMR) show a composition bias toward polar residues.

The protein belongs to the intermediate filament family. In terms of assembly, heterotetramer of two type I and two type II keratins. Highly expressed in hair follicles from scalp. In hair, it is specifically present in the inner root sheath (IRS) of the hair follicle. Present in the IRS cuticle, but not in Henle or Huxley layers of the IRS. In the IRS cuticle, it is expressed between the lowermost bulb region of the cuticle and the region where Henle cells undergo abrupt terminal differentiation. Detected up to the uppermost cortex region where cuticle cells terminally differentiate (at protein level).

Has a role in hair formation. Specific component of keratin intermediate filaments in the inner root sheath (IRS) of the hair follicle. In Homo sapiens (Human), this protein is Keratin, type II cytoskeletal 73 (KRT73).